The following is a 103-amino-acid chain: Astacin-like peptidase p16 (103 aa).

The Peptidase M12A domain occupies 1–103; that stretch reads NAIPGQHYRW…DAFSRDGSPM (103 aa).

Requires Zn(2+) as cofactor.

Functionally, active against casein. Has a role as a digestive enzyme. The protein is Astacin-like peptidase p16 of Argiope aurantia (Black-and-yellow garden spider).